The chain runs to 497 residues: Histidine--tRNA ligase (497 aa).

This sequence belongs to the class-II aminoacyl-tRNA synthetase family. In terms of assembly, homodimer.

Its subcellular location is the cytoplasm. It catalyses the reaction tRNA(His) + L-histidine + ATP = L-histidyl-tRNA(His) + AMP + diphosphate + H(+). This is Histidine--tRNA ligase from Dinoroseobacter shibae (strain DSM 16493 / NCIMB 14021 / DFL 12).